Consider the following 368-residue polypeptide: MPGQIISIPFLSQNEDMDKYLLEYRSLKLLHQSSNSFQSHNAPSHQSNYHPHYNHMKYNNTGSYYYYNNNNNSSVNPHNQAGLQSINRSIPSAPYGAYNQNRANDVPYMNTQKKHHRFSANNNLNQQKYKQYPQYTSNPMVTAHLKQTYPQLYYNSNVNAHNNNNNSNNNNNNNNNSNNNNNLYNQTQFSTRYFNSNSSPSLTSSTSNSSSPYNQSTFEYILPSTSAASTNLSSSSSNNSMHTNPTTATSTSADLINDLPVGPTSSSLISDLHSPPTVSFLPASQTLLMSSTTSSSIGTNINPPQHSPSPSQREDFSTAPVNMSSSASLLMNDSSLGWGSNHMNVSSSSQPASSRPFGIWNTDMSVWS.

The segment covering 156 to 182 has biased composition (low complexity); the sequence is SNVNAHNNNNNSNNNNNNNNNSNNNNN. Disordered stretches follow at residues 156-213, 228-259, and 291-319; these read SNVN…SSPY, ASTN…INDL, and STTS…FSTA. Polar residues predominate over residues 183–194; that stretch reads LYNQTQFSTRYF. 2 stretches are compositionally biased toward low complexity: residues 195–213 and 228–240; these read NSNS…SSPY and ASTN…SNNS. 2 stretches are compositionally biased toward polar residues: residues 241 to 254 and 297 to 311; these read MHTN…TSAD and IGTN…PSPS.

This is an uncharacterized protein from Saccharomyces cerevisiae (strain ATCC 204508 / S288c) (Baker's yeast).